Reading from the N-terminus, the 376-residue chain is tRNA-specific 2-thiouridylase MnmA (376 aa).

Residues 14-21 (GMSGGVDS) and Met-40 contribute to the ATP site. The segment at 100 to 102 (NPD) is interaction with target base in tRNA. The active-site Nucleophile is Cys-105. An intrachain disulfide couples Cys-105 to Cys-202. Gly-129 lines the ATP pocket. Residues 152–154 (KDQ) form an interaction with tRNA region. Cys-202 acts as the Cysteine persulfide intermediate in catalysis. The segment at 315 to 316 (RY) is interaction with tRNA.

Belongs to the MnmA/TRMU family.

It localises to the cytoplasm. It catalyses the reaction S-sulfanyl-L-cysteinyl-[protein] + uridine(34) in tRNA + AH2 + ATP = 2-thiouridine(34) in tRNA + L-cysteinyl-[protein] + A + AMP + diphosphate + H(+). Its function is as follows. Catalyzes the 2-thiolation of uridine at the wobble position (U34) of tRNA, leading to the formation of s(2)U34. The polypeptide is tRNA-specific 2-thiouridylase MnmA (Lactococcus lactis subsp. cremoris (strain SK11)).